The sequence spans 865 residues: Leucine--tRNA ligase (865 aa).

The 'HIGH' region motif lies at 36–46; that stretch reads PYPSGKIHMGH. The 'KMSKS' region signature appears at 608-612; the sequence is KMSKS. Residue lysine 611 participates in ATP binding.

Belongs to the class-I aminoacyl-tRNA synthetase family.

It is found in the cytoplasm. It carries out the reaction tRNA(Leu) + L-leucine + ATP = L-leucyl-tRNA(Leu) + AMP + diphosphate. The protein is Leucine--tRNA ligase of Wolbachia sp. subsp. Brugia malayi (strain TRS).